A 107-amino-acid polypeptide reads, in one-letter code: Putative ankyrin repeat protein RP714 (107 aa).

3 ANK repeats span residues 7–36, 40–69, and 73–102; these read PPLS…DIDV, NGNS…TIDA, and ELAT…NKSA.

The protein is Putative ankyrin repeat protein RP714 of Rickettsia prowazekii (strain Madrid E).